The chain runs to 479 residues: Arf-GAP domain and FG repeat-containing protein 2 (479 aa).

One can recognise an Arf-GAP domain in the interval glutamate 27–glycine 153. The segment at cysteine 47–cysteine 70 adopts a C4-type zinc-finger fold. Disordered stretches follow at residues glutamine 150–alanine 223 and leucine 450–leucine 479. A compositionally biased stretch (polar residues) spans serine 157–glutamine 167. An N6-acetyllysine modification is found at lysine 174. Low complexity predominate over residues serine 194 to serine 218. The span at alanine 454–leucine 479 shows a compositional bias: polar residues.

As to quaternary structure, interacts with EPS15R.

The chain is Arf-GAP domain and FG repeat-containing protein 2 (Agfg2) from Mus musculus (Mouse).